Here is a 930-residue protein sequence, read N- to C-terminus: Isoleucine--tRNA ligase (930 aa).

Positions 57–67 match the 'HIGH' region motif; it reads PYANGNIHVGH. Glutamate 554 contributes to the L-isoleucyl-5'-AMP binding site. The 'KMSKS' region motif lies at 595-599; it reads KMSKS. Position 598 (lysine 598) interacts with ATP.

Belongs to the class-I aminoacyl-tRNA synthetase family. IleS type 1 subfamily. As to quaternary structure, monomer.

Its subcellular location is the cytoplasm. It catalyses the reaction tRNA(Ile) + L-isoleucine + ATP = L-isoleucyl-tRNA(Ile) + AMP + diphosphate. Functionally, catalyzes the attachment of isoleucine to tRNA(Ile). As IleRS can inadvertently accommodate and process structurally similar amino acids such as valine, to avoid such errors it has two additional distinct tRNA(Ile)-dependent editing activities. One activity is designated as 'pretransfer' editing and involves the hydrolysis of activated Val-AMP. The other activity is designated 'posttransfer' editing and involves deacylation of mischarged Val-tRNA(Ile). The protein is Isoleucine--tRNA ligase of Streptococcus agalactiae serotype III (strain NEM316).